The primary structure comprises 133 residues: S-adenosylmethionine decarboxylase proenzyme (133 aa).

The active-site Schiff-base intermediate with substrate; via pyruvic acid is the Ser-64. Position 64 is a pyruvic acid (Ser); by autocatalysis (Ser-64). Residue His-69 is the Proton acceptor; for processing activity of the active site. Cys-84 functions as the Proton donor; for catalytic activity in the catalytic mechanism.

The protein belongs to the prokaryotic AdoMetDC family. Type 1 subfamily. As to quaternary structure, heterotetramer of two alpha and two beta chains arranged as a dimer of alpha/beta heterodimers. Pyruvate serves as cofactor. In terms of processing, is synthesized initially as an inactive proenzyme. Formation of the active enzyme involves a self-maturation process in which the active site pyruvoyl group is generated from an internal serine residue via an autocatalytic post-translational modification. Two non-identical subunits are generated from the proenzyme in this reaction, and the pyruvate is formed at the N-terminus of the alpha chain, which is derived from the carboxyl end of the proenzyme. The post-translation cleavage follows an unusual pathway, termed non-hydrolytic serinolysis, in which the side chain hydroxyl group of the serine supplies its oxygen atom to form the C-terminus of the beta chain, while the remainder of the serine residue undergoes an oxidative deamination to produce ammonia and the pyruvoyl group blocking the N-terminus of the alpha chain.

The enzyme catalyses S-adenosyl-L-methionine + H(+) = S-adenosyl 3-(methylsulfanyl)propylamine + CO2. The protein operates within amine and polyamine biosynthesis; S-adenosylmethioninamine biosynthesis; S-adenosylmethioninamine from S-adenosyl-L-methionine: step 1/1. Its function is as follows. Catalyzes the decarboxylation of S-adenosylmethionine to S-adenosylmethioninamine (dcAdoMet), the propylamine donor required for the synthesis of the polyamines spermine and spermidine from the diamine putrescine. This Persephonella marina (strain DSM 14350 / EX-H1) protein is S-adenosylmethionine decarboxylase proenzyme.